Reading from the N-terminus, the 262-residue chain is MEELNKSGIYSKQFSLSQNKHNSERLQRLEKRLSGLHFSIELQKNEKIDKLNEKINSLEEKLIEMHENSNKTFEKLNEKLNDIRNDVTNYKNELEEFKNDHKKKLQLLEEKAEDFINKEKEDWSRLKIKLVKDFQHKAALLKEEMVEEYGLIEEKEDSLRKYYDCEINNIKSIIQNEISERIKTEKIILSDVDDKINEIMKIIRNEKTTRETYSENLVSLIEQYFSRIKKEIDMERLEREDTEETLVHLMEEALDKIGIPLA.

Positions 41-118 (ELQKNEKIDK…EEKAEDFINK (78 aa)) form a coiled coil.

This is an uncharacterized protein from Plasmodium falciparum (isolate 3D7).